Consider the following 492-residue polypeptide: 2,3-bisphosphoglycerate-independent phosphoglycerate mutase (492 aa).

2 residues coordinate Mn(2+): Asp11 and Ser61. The active-site Phosphoserine intermediate is Ser61. Substrate-binding positions include His118, 147-148, Arg178, Arg184, 248-251, and Lys320; these read RD and RNDR. Residues Asp386, His390, Asp427, His428, and His445 each coordinate Mn(2+).

The protein belongs to the BPG-independent phosphoglycerate mutase family. In terms of assembly, monomer. Mn(2+) is required as a cofactor.

It carries out the reaction (2R)-2-phosphoglycerate = (2R)-3-phosphoglycerate. The protein operates within carbohydrate degradation; glycolysis; pyruvate from D-glyceraldehyde 3-phosphate: step 3/5. Functionally, catalyzes the interconversion of 2-phosphoglycerate and 3-phosphoglycerate. This is 2,3-bisphosphoglycerate-independent phosphoglycerate mutase from Campylobacter jejuni subsp. jejuni serotype O:2 (strain ATCC 700819 / NCTC 11168).